The sequence spans 950 residues: Serine/threonine-protein kinase 10-A (950 aa).

Residues 36 to 294 (WEIIGELGDG…AAQLLEHPFV (259 aa)) form the Protein kinase domain. ATP is bound by residues 42–50 (LGDGAFGKV) and K65. D157 functions as the Proton acceptor in the catalytic mechanism. Residues 319–331 (EEQGEAEEEEDSD) are compositionally biased toward acidic residues. A disordered region spans residues 319–478 (EEQGEAEEEE…DSGSNSASES (160 aa)). Over residues 347–356 (EIGKDIEREQ) the composition is skewed to basic and acidic residues. The segment covering 365–382 (SATSPQKTDSQADNYSQR) has biased composition (polar residues). Positions 416–432 (EPKRNSTAESYRGEEHS) are enriched in basic and acidic residues. Low complexity predominate over residues 433-445 (SASSQRQRSAQSA). Positions 452–463 (SFDSPTRYFTNW) are enriched in polar residues. Phosphoserine; by PLK1 occurs at positions 482, 486, and 490. The stretch at 634–786 (IKFLEQLKLR…QLRLRQQQEK (153 aa)) forms a coiled coil.

It belongs to the protein kinase superfamily. STE Ser/Thr protein kinase family. STE20 subfamily. As to quaternary structure, homodimer. Post-translationally, autophosphorylates. Phosphorylated by plk1/plx1, suggesting the existence of a feedback loop with plk1/plx1. activation of the protein.

It localises to the cell membrane. It catalyses the reaction L-seryl-[protein] + ATP = O-phospho-L-seryl-[protein] + ADP + H(+). The catalysed reaction is L-threonyl-[protein] + ATP = O-phospho-L-threonyl-[protein] + ADP + H(+). May act as a polo kinase kinase by mediating phosphorylation of plk1/plx1 and subsequent activation of plk1/plx1 during oocyte maturation. This chain is Serine/threonine-protein kinase 10-A (stk10-a), found in Xenopus laevis (African clawed frog).